Consider the following 261-residue polypeptide: Na(+)-translocating NADH-quinone reductase subunit C (261 aa).

A helical membrane pass occupies residues 12–32 (LGVVVGLSLVCSIIVSTAAVG). The residue at position 229 (Thr229) is an FMN phosphoryl threonine.

Composed of six subunits; NqrA, NqrB, NqrC, NqrD, NqrE and NqrF. FMN is required as a cofactor.

Its subcellular location is the cell inner membrane. The catalysed reaction is a ubiquinone + n Na(+)(in) + NADH + H(+) = a ubiquinol + n Na(+)(out) + NAD(+). Functionally, NQR complex catalyzes the reduction of ubiquinone-1 to ubiquinol by two successive reactions, coupled with the transport of Na(+) ions from the cytoplasm to the periplasm. NqrA to NqrE are probably involved in the second step, the conversion of ubisemiquinone to ubiquinol. The chain is Na(+)-translocating NADH-quinone reductase subunit C from Vibrio campbellii (strain ATCC BAA-1116).